The following is a 247-amino-acid chain: Carboxy-S-adenosyl-L-methionine synthase (247 aa).

S-adenosyl-L-methionine is bound by residues tyrosine 39, 64-66 (GCS), 89-90 (DN), 117-118 (DI), asparagine 132, and arginine 199.

This sequence belongs to the class I-like SAM-binding methyltransferase superfamily. Cx-SAM synthase family. Homodimer.

The enzyme catalyses prephenate + S-adenosyl-L-methionine = carboxy-S-adenosyl-L-methionine + 3-phenylpyruvate + H2O. Its function is as follows. Catalyzes the conversion of S-adenosyl-L-methionine (SAM) to carboxy-S-adenosyl-L-methionine (Cx-SAM). The polypeptide is Carboxy-S-adenosyl-L-methionine synthase (Escherichia coli O17:K52:H18 (strain UMN026 / ExPEC)).